A 272-amino-acid polypeptide reads, in one-letter code: Large ribosomal subunit protein uL29m (272 aa).

Disordered regions lie at residues methionine 1–glutamine 29, lysine 56–lysine 87, and alanine 227–leucine 272. The span at serine 17–glutamine 29 shows a compositional bias: low complexity. Low complexity-rich tracts occupy residues alanine 227–glutamate 238 and proline 249–threonine 259. Polar residues predominate over residues isoleucine 260–leucine 272.

The protein belongs to the universal ribosomal protein uL29 family. As to quaternary structure, component of the mitochondrial large ribosomal subunit. Mature mitochondrial ribosomes consist of a small (37S) and a large (54S) subunit. The 37S subunit contains at least 33 different proteins and 1 molecule of RNA (15S). The 54S subunit contains at least 45 different proteins and 1 molecule of RNA (21S).

The protein resides in the mitochondrion. The protein is Large ribosomal subunit protein uL29m (MRPL4) of Chaetomium globosum (strain ATCC 6205 / CBS 148.51 / DSM 1962 / NBRC 6347 / NRRL 1970) (Soil fungus).